The following is a 167-amino-acid chain: NAD(P)H-quinone oxidoreductase subunit I, chloroplastic (167 aa).

2 4Fe-4S ferredoxin-type domains span residues 55–84 and 95–124; these read GRIH…VDWK and LNYS…MTEE. 8 residues coordinate [4Fe-4S] cluster: Cys-64, Cys-67, Cys-70, Cys-74, Cys-104, Cys-107, Cys-110, and Cys-114.

This sequence belongs to the complex I 23 kDa subunit family. NDH is composed of at least 16 different subunits, 5 of which are encoded in the nucleus. [4Fe-4S] cluster is required as a cofactor.

The protein resides in the plastid. It localises to the chloroplast thylakoid membrane. It catalyses the reaction a plastoquinone + NADH + (n+1) H(+)(in) = a plastoquinol + NAD(+) + n H(+)(out). The catalysed reaction is a plastoquinone + NADPH + (n+1) H(+)(in) = a plastoquinol + NADP(+) + n H(+)(out). In terms of biological role, NDH shuttles electrons from NAD(P)H:plastoquinone, via FMN and iron-sulfur (Fe-S) centers, to quinones in the photosynthetic chain and possibly in a chloroplast respiratory chain. The immediate electron acceptor for the enzyme in this species is believed to be plastoquinone. Couples the redox reaction to proton translocation, and thus conserves the redox energy in a proton gradient. The polypeptide is NAD(P)H-quinone oxidoreductase subunit I, chloroplastic (Atropa belladonna (Belladonna)).